Reading from the N-terminus, the 897-residue chain is Interleukin enhancer-binding factor 3 (897 aa).

One can recognise a DZF domain in the interval 5 to 378 (RIFVNDDRHV…PMKRPMEEDG (374 aa)). The tract at residues 52–85 (QEKGNSELSEAENMDTPPDDESKEGAGEQKAEHM) is disordered. Positions 60-73 (SEAENMDTPPDDES) are enriched in acidic residues. Residue T67 is modified to Phosphothreonine. A compositionally biased stretch (basic and acidic residues) spans 74 to 85 (KEGAGEQKAEHM). N6-acetyllysine is present on K100. The residue at position 188 (T188) is a Phosphothreonine; by PKR. S190 carries the phosphoserine modification. K297 is covalently cross-linked (Glycyl lysine isopeptide (Lys-Gly) (interchain with G-Cter in ubiquitin)). T315 is subject to Phosphothreonine; by PKR. Residue K348 forms a Glycyl lysine isopeptide (Lys-Gly) (interchain with G-Cter in SUMO1) linkage. The interval 363 to 401 (TTYAITPMKRPMEEDGEEKSPSKKKKKIQKKEEKAEPPQ) is disordered. Positions 371-389 (KRPMEEDGEEKSPSKKKKK) match the Bipartite nuclear localization signal motif. Over residues 372 to 383 (RPMEEDGEEKSP) the composition is skewed to basic and acidic residues. Residues S382 and S384 each carry the phosphoserine modification. K396 participates in a covalent cross-link: Glycyl lysine isopeptide (Lys-Gly) (interchain with G-Cter in SUMO2). Positions 398 to 467 (EPPQAMNALM…AVKVLQDMGL (70 aa)) constitute a DRBM 1 domain. N6-acetyllysine is present on K460. Disordered stretches follow at residues 466–524 (GLPT…LTKH), 624–662 (GMGG…GTNH), and 720–897 (GDSY…YQYR). Over residues 472-481 (EGRDSSKGED) the composition is skewed to basic and acidic residues. Phosphoserine occurs at positions 476, 477, 482, and 486. K489 participates in a covalent cross-link: Glycyl lysine isopeptide (Lys-Gly) (interchain with G-Cter in SUMO2). Positions 499 to 508 (VEAVSNPSSV) are enriched in low complexity. Residues 524–590 (HGKNPVMELN…ALAALEKLFP (67 aa)) enclose the DRBM 2 domain. The tract at residues 609 to 897 (RGGPKFAAKP…TEHSMNYQYR (289 aa)) is interaction with PRMT1. Gly residues predominate over residues 644–662 (RGGNIRGRGRGRGFGGTNH). 3 stretches are compositionally biased toward low complexity: residues 745–769 (SYSS…SSYG), 783–794 (GSYSSYSNSYNS), and 802–812 (DYSYDSKFNYS). Residues S794, S812, S814, and S818 each carry the phosphoserine modification. Positions 813 to 822 (GSGGRSGGNS) are enriched in gly residues. Low complexity predominate over residues 823–833 (YGSSGSSYNTG). Over residues 834-844 (SHGGYGAGSGG) the composition is skewed to gly residues. Positions 845-885 (SSSYQGKQGGYSSQSNYSSPGSSQSYSGPASSYQSSQGGYS) are enriched in low complexity.

In terms of assembly, identified in a IGF2BP1-dependent mRNP granule complex containing untranslated mRNAs. Interacts with FUS and SMN. Interacts (via C-terminus) with PRMT1. Forms a complex with ILF2. Can also bind to PRKDC/XRCC7: this may stabilize the interaction of PRKDC/XRCC7 and the heterodimeric complex of XRCC6/KU70 and XRCC5/KU80. Forms a heteromeric complex with ZNF346 and ILF3. Found in a nuclear export complex with XPO5, ILF3, Ran and double-stranded RNA or double-stranded minihelix VA1 RNA. Found in a nuclear export complex with XPO5, RAN, ILF3, ZNF346 and double-stranded RNA. Interacts with XPO5 and ZNF346. Forms a complex with ILF2, YLPM1, KHDRBS1, RBMX, NCOA5 and PPP1CA. Interacts with AGO1 and AGO2. Interacts with DHX36; this interaction occurs in a RNA-dependent manner. Interacts with ELAVL1; this interaction occurs in a RNA-dependent manner. Interacts with HAVCR2; this interaction promotes ILF3 ubiquitination and subsequent degradation. Post-translationally, phosphorylated at Thr-188 and Thr-315 by PKR in response to RNA viruses. This phosphorylation results in the dissociation of ILF2 from the ILF2-ILF3 complex resulting in a cytoplasmic sequestration of ILF3 where it can bind to viral RNAs and impede viral replication. Methylated by protein arginine N-methyltransferase 1.

The protein localises to the nucleus. The protein resides in the nucleolus. Its subcellular location is the cytoplasm. Functionally, RNA-binding protein that plays an essential role in the biogenesis of circular RNAs (circRNAs) which are produced by back-splicing circularization of pre-mRNAs. Within the nucleus, promotes circRNAs processing by stabilizing the regulatory elements residing in the flanking introns of the circularized exons. Plays thereby a role in the back-splicing of a subset of circRNAs. As a consequence, participates in a wide range of transcriptional and post-transcriptional processes. Binds to poly-U elements and AU-rich elements (AREs) in the 3'-UTR of target mRNAs. Upon viral infection, ILF3 accumulates in the cytoplasm and participates in the innate antiviral response. Mechanistically, ILF3 becomes phosphorylated and activated by the double-stranded RNA-activated protein kinase/PKR which releases ILF3 from cellular mature circRNAs. In turn, unbound ILF3 molecules are able to interact with and thus inhibit viral mRNAs. The protein is Interleukin enhancer-binding factor 3 (Ilf3) of Rattus norvegicus (Rat).